The chain runs to 450 residues: Solute carrier family 52, riboflavin transporter, member 2 (450 aa).

Transmembrane regions (helical) follow at residues 14–34 (LLVA…WVEL), 47–67 (LPSY…LVTL), 79–99 (IPIQ…APLW), 114–136 (FLTL…LPFL), and 147–167 (FFLG…AQGV). A glycan (N-linked (GlcNAc...) asparagine) is linked at Asn178. A helical transmembrane segment spans residues 201-221 (FFWVLTALLGTSAAAFQGLLL). The interval 230–268 (ATMGTGLRVETPGTEEEEEEEEASPLQEPPGQVASIVSS) is disordered. Positions 242–252 (GTEEEEEEEEA) are enriched in acidic residues. Helical transmembrane passes span 282-302 (ACLL…LPAV), 317-337 (LAVV…MAVL), 344-364 (LYGL…LAVL), 371-391 (VGTS…AGVF), and 409-429 (ALLA…IAMF).

Belongs to the riboflavin transporter family. As to expression, highly expressed in the placenta and small intestine, moderately in the kidney, colon, lung, prostate, uterus, and thymus, and weakly in all other tissues.

It localises to the cell membrane. It carries out the reaction riboflavin(in) = riboflavin(out). Riboflavin transport is Na(+)-independent but moderately pH-sensitive. Activity is strongly inhibited by riboflavin analogs, such as lumiflavin. Weakly inhibited by flavin adenine dinucleotide (FAD) and flavin mononucleotide (FMN). Its function is as follows. Plasma membrane transporter mediating the uptake by cells of the water soluble vitamin B2/riboflavin that plays a key role in biochemical oxidation-reduction reactions of the carbohydrate, lipid, and amino acid metabolism. May also act as a receptor for 4-hydroxybutyrate. This Rattus norvegicus (Rat) protein is Solute carrier family 52, riboflavin transporter, member 2 (Slc52a2).